The following is a 451-amino-acid chain: Multidrug export protein MepA (451 aa).

The next 12 membrane-spanning stretches (helical) occupy residues 26–46 (MIGT…IGFL), 54–74 (AISL…LFGV), 97–117 (SFSI…TLPF), 139–159 (LKVM…EQFA), 170–190 (IGML…IFGF), 194–214 (VVGA…FFIV), 245–265 (IPAF…NLFL), 282–302 (LVQF…PLIA), 318–338 (AVIM…FTIG), 355–375 (ATFI…GFLF), 397–417 (AIII…GVIW), and 418–438 (SLLI…YLLR).

This sequence belongs to the multi antimicrobial extrusion (MATE) (TC 2.A.66.1) family. MepA subfamily.

Its subcellular location is the cell membrane. Functionally, multidrug resistance efflux protein. This chain is Multidrug export protein MepA (mepA), found in Staphylococcus aureus (strain MSSA476).